A 104-amino-acid chain; its full sequence is Protamine-2 (104 aa).

Residues Ser8 and Ser10 each carry the phosphoserine modification. Residues 23-104 (WQEQGRNGQE…SRRRRRCRRY (82 aa)) are disordered. The segment covering 24 to 35 (QEQGRNGQEEQG) has biased composition (low complexity). A Phosphoserine modification is found at Ser37. The segment covering 54–104 (YRRRRCSRRRRYRIHRRRSRSCRRRRRRSCRYRRRPRRGCRSRRRRRCRRY) has biased composition (basic residues).

It belongs to the protamine P2 family. Interacts with TDRP. Proteolytic processing into mature chains is required for histone eviction during spermatogenesis. Transition proteins (TNP1 and TNP2) are required for processing. Testis.

The protein resides in the nucleus. The protein localises to the chromosome. Functionally, protamines substitute for histones in the chromatin of sperm during the haploid phase of spermatogenesis. They compact sperm DNA into a highly condensed, stable and inactive complex. The protein is Protamine-2 (PRM2) of Callithrix jacchus (White-tufted-ear marmoset).